Reading from the N-terminus, the 451-residue chain is Chromosomal replication initiator protein DnaA (451 aa).

A domain I, interacts with DnaA modulators region spans residues 1–94; it reads MKPDLSSLWQ…KPEPKPAQPS (94 aa). The disordered stretch occupies residues 87 to 106; it reads EPKPAQPSALPTHHNKEENK. The tract at residues 95–113 is domain II; it reads ALPTHHNKEENKPQTVIRS. The domain III, AAA+ region stretch occupies residues 114 to 331; it reads YLNPKHVFEN…GALNRVSANA (218 aa). Positions 159, 161, 162, and 163 each coordinate ATP. Positions 332–451 are domain IV, binds dsDNA; the sequence is EFMGAAITID…WSNLIRTLSV (120 aa).

The protein belongs to the DnaA family. In terms of assembly, oligomerizes as a right-handed, spiral filament on DNA at oriC.

The protein resides in the cytoplasm. Functionally, plays an essential role in the initiation and regulation of chromosomal replication. ATP-DnaA binds to the origin of replication (oriC) to initiate formation of the DNA replication initiation complex once per cell cycle. Binds the DnaA box (a 9 base pair repeat at the origin) and separates the double-stranded (ds)DNA. Forms a right-handed helical filament on oriC DNA; dsDNA binds to the exterior of the filament while single-stranded (ss)DNA is stabiized in the filament's interior. The ATP-DnaA-oriC complex binds and stabilizes one strand of the AT-rich DNA unwinding element (DUE), permitting loading of DNA polymerase. After initiation quickly degrades to an ADP-DnaA complex that is not apt for DNA replication. Binds acidic phospholipids. This is Chromosomal replication initiator protein DnaA from Pasteurella multocida (strain Pm70).